We begin with the raw amino-acid sequence, 466 residues long: 3-isopropylmalate dehydratase large subunit (466 aa).

Positions 347, 407, and 410 each coordinate [4Fe-4S] cluster.

Belongs to the aconitase/IPM isomerase family. LeuC type 1 subfamily. In terms of assembly, heterodimer of LeuC and LeuD. [4Fe-4S] cluster is required as a cofactor.

It catalyses the reaction (2R,3S)-3-isopropylmalate = (2S)-2-isopropylmalate. The protein operates within amino-acid biosynthesis; L-leucine biosynthesis; L-leucine from 3-methyl-2-oxobutanoate: step 2/4. In terms of biological role, catalyzes the isomerization between 2-isopropylmalate and 3-isopropylmalate, via the formation of 2-isopropylmaleate. The protein is 3-isopropylmalate dehydratase large subunit of Escherichia coli O45:K1 (strain S88 / ExPEC).